A 266-amino-acid polypeptide reads, in one-letter code: MPDVTLTTLQGLKQSGEKIAMLTCYDATFAHTASQAGVDVLLVGDSLGMVLQGHDSTLPVSNEEMAYHTACVKRGNKGSLIVTDLAFESSHSVAQTLADAVRLMQAGAHMVKLEGGAWLAEPIARLAQMGVPVCAHLGLTPQAVNLFGGFKVQGRQETQARQLRADAIALEQAGAAMLLLECVPSVLAEEITQAVKIPVIGIGAGAATDGQVLVMHDMLGLSLTGRSPKFVKDFMQGQESIPAAIAAYVRAVKDVSFPAAEHGFNA.

2 residues coordinate Mg(2+): Asp45 and Asp84. 3-methyl-2-oxobutanoate is bound by residues Asp45–Ser46, Asp84, and Lys112. Glu114 lines the Mg(2+) pocket. The active-site Proton acceptor is Glu181.

Belongs to the PanB family. As to quaternary structure, homodecamer; pentamer of dimers. Requires Mg(2+) as cofactor.

Its subcellular location is the cytoplasm. The catalysed reaction is 3-methyl-2-oxobutanoate + (6R)-5,10-methylene-5,6,7,8-tetrahydrofolate + H2O = 2-dehydropantoate + (6S)-5,6,7,8-tetrahydrofolate. It functions in the pathway cofactor biosynthesis; (R)-pantothenate biosynthesis; (R)-pantoate from 3-methyl-2-oxobutanoate: step 1/2. Catalyzes the reversible reaction in which hydroxymethyl group from 5,10-methylenetetrahydrofolate is transferred onto alpha-ketoisovalerate to form ketopantoate. This Pseudomonas aeruginosa (strain UCBPP-PA14) protein is 3-methyl-2-oxobutanoate hydroxymethyltransferase 2.